We begin with the raw amino-acid sequence, 20 residues long: Fibrinogen (20 aa).

Residues 1–20 (LHSNLEYQYRYSGRVASGIP) enclose the Vitellogenin domain.

As to expression, secreted into the hemolymph.

It localises to the secreted. Its subcellular location is the extracellular space. In terms of biological role, involved in lipid transport. Plays a role in hemolymph clotting. May be involved in wound healing in the cuticle. This Pacifastacus leniusculus (Signal crayfish) protein is Fibrinogen.